A 309-amino-acid chain; its full sequence is Transaldolase (309 aa).

Lysine 125 acts as the Schiff-base intermediate with substrate in catalysis.

Belongs to the transaldolase family. Type 1 subfamily. Homodimer.

The protein localises to the cytoplasm. It catalyses the reaction D-sedoheptulose 7-phosphate + D-glyceraldehyde 3-phosphate = D-erythrose 4-phosphate + beta-D-fructose 6-phosphate. The protein operates within carbohydrate degradation; pentose phosphate pathway; D-glyceraldehyde 3-phosphate and beta-D-fructose 6-phosphate from D-ribose 5-phosphate and D-xylulose 5-phosphate (non-oxidative stage): step 2/3. Functionally, transaldolase is important for the balance of metabolites in the pentose-phosphate pathway. The polypeptide is Transaldolase (Pseudomonas syringae pv. tomato (strain ATCC BAA-871 / DC3000)).